Here is a 434-residue protein sequence, read N- to C-terminus: Adenylosuccinate synthetase (434 aa).

GTP contacts are provided by residues 12–18 (GDEGKGK) and 40–42 (GHT). The active-site Proton acceptor is the Asp13. Residues Asp13 and Gly40 each coordinate Mg(2+). Residues 13–16 (DEGK), 38–41 (NAGH), Thr129, Arg143, Gln224, Thr239, and Arg303 each bind IMP. His41 functions as the Proton donor in the catalytic mechanism. 299–305 (AVTGRPR) contributes to the substrate binding site. GTP is bound by residues Arg305, 331–333 (KLD), and 413–415 (STG).

It belongs to the adenylosuccinate synthetase family. In terms of assembly, homodimer. It depends on Mg(2+) as a cofactor.

The protein resides in the cytoplasm. The catalysed reaction is IMP + L-aspartate + GTP = N(6)-(1,2-dicarboxyethyl)-AMP + GDP + phosphate + 2 H(+). The protein operates within purine metabolism; AMP biosynthesis via de novo pathway; AMP from IMP: step 1/2. Plays an important role in the de novo pathway of purine nucleotide biosynthesis. Catalyzes the first committed step in the biosynthesis of AMP from IMP. This Solibacter usitatus (strain Ellin6076) protein is Adenylosuccinate synthetase.